The chain runs to 736 residues: Fidgetin (736 aa).

Disordered regions lie at residues 118 to 155 (GMTPALPPPDVTASVGSSTGVASSLSEPSYSSSNCGNH), 180 to 248 (TYSG…YSPG), 272 to 295 (IPGYSYQSHNHAPIAPTPLNGSSA), and 341 to 438 (STRG…AEEQ). The segment covering 128–150 (VTASVGSSTGVASSLSEPSYSSS) has biased composition (low complexity). A compositionally biased stretch (pro residues) spans 205-214 (QPPPPPPPTL). The segment covering 216–232 (PSYNTSSPNLSSYNYPP) has biased composition (low complexity). The span at 352-368 (DTSSLAFKPTKQSMPTD) shows a compositional bias: polar residues. ATP is bound by residues alanine 467 and 507-512 (GTGRTL).

This sequence belongs to the AAA ATPase family.

The protein resides in the nucleus matrix. It is found in the cytoplasm. Its subcellular location is the cytoskeleton. The protein localises to the microtubule organizing center. It localises to the centrosome. Its function is as follows. ATP-dependent microtubule severing protein. Severs microtubules along their length and depolymerizes their ends, primarily the minus-end, suppressing microtubule growth from and attachment to centrosomes. Microtubule severing may promote rapid reorganization of cellular microtubule arrays and the release of microtubules from the centrosome following nucleation. Microtubule release from the mitotic spindle poles may allow depolymerization of the microtubule end proximal to the spindle pole, leading to poleward microtubule flux and poleward motion of chromosome. This is Fidgetin (fign) from Danio rerio (Zebrafish).